A 153-amino-acid polypeptide reads, in one-letter code: uncharacterized protein (153 aa).

This is an uncharacterized protein from Allochromatium vinosum (strain ATCC 17899 / DSM 180 / NBRC 103801 / NCIMB 10441 / D) (Chromatium vinosum).